The sequence spans 298 residues: Cyclin-C (298 aa).

Residues 46-162 (NFITAVATEC…ILDCCLVVHH (117 aa)) form the Cyclin N-terminal domain. Residues 278–298 (KLPKPNTPIPPPQQQQSSYHM) form a disordered region.

Belongs to the cyclin family. Cyclin C subfamily. In terms of assembly, component of the Mediator complex.

The protein localises to the nucleus. In terms of biological role, component of the Mediator complex, a coactivator involved in regulated gene transcription of nearly all RNA polymerase II-dependent genes. Mediator functions as a bridge to convey information from gene-specific regulatory proteins to the basal RNA polymerase II transcription machinery. Mediator is recruited to promoters by direct interactions with regulatory proteins and serves as a scaffold for the assembly of a functional preinitiation complex with RNA polymerase II and the general transcription factors. Binds to and activates cyclin-dependent kinase cdk-8 that phosphorylates the CTD (C-terminal domain) of the large subunit of RNA polymerase II (RNAp II), which may inhibit the formation of a transcription initiation complex. The protein is Cyclin-C (cic-1) of Caenorhabditis briggsae.